We begin with the raw amino-acid sequence, 330 residues long: FKBP12-interacting protein of 37 kDa (330 aa).

Methionine 1 carries the post-translational modification N-acetylmethionine. A compositionally biased stretch (acidic residues) spans 1–12 (MEFSSQDDDFGG). The interval 1–43 (MEFSSQDDDFGGDDSAANATRASGNRRSFGDLEDDEDDIFGST) is disordered. The span at 17–26 (ANATRASGNR) shows a compositional bias: polar residues. The stretch at 56-308 (SLRGSLKNCK…KGLEIVSELV (253 aa)) forms a coiled coil.

It belongs to the fl(2)d family. As to quaternary structure, forms homodimers. Interacts with MTA/EMB1706. Interacts with FKBP12; interaction is inhibited by the immunosuppressive drug FK506. Interacts with VIR. Associates with MTA, MTB, VIR and HAKAI to form the m6A writer complex which is essential for adenosine methylation at specific mRNA sequences. In terms of tissue distribution, ubiquitously expressed with higher levels in primary and lateral roots, leaves, trichomes, and in pollen grains (at protein level).

Its subcellular location is the nucleus speckle. The protein resides in the nucleus. It is found in the nucleoplasm. Functionally, probable regulatory subunit of the N6-methyltransferase complex, a multiprotein complex that mediates N6-methyladenosine (m6A) methylation at the 5'-[AG]GAC-3' consensus sites of some mRNAs. Associates with MTA, MTB, VIR and HAKAI to form the m6A writer complex which is essential for adenosine methylation at specific mRNA sequences. N6-methyladenosine (m6A) plays a role in mRNA stability, processing, translation efficiency and editing. Essential protein required during endosperm development and embryogenesis. Involved in endoreduplication, especially in trichomes. May play a role in splicing events. The protein is FKBP12-interacting protein of 37 kDa of Arabidopsis thaliana (Mouse-ear cress).